The chain runs to 190 residues: Large ribosomal subunit protein eL15 (190 aa).

The protein belongs to the eukaryotic ribosomal protein eL15 family.

This chain is Large ribosomal subunit protein eL15 (rpl15e), found in Nanoarchaeum equitans (strain Kin4-M).